The sequence spans 332 residues: Lipoyl synthase (332 aa).

Residues C79, C84, C90, C105, C109, C112, and S319 each coordinate [4Fe-4S] cluster. The 218-residue stretch at 91-308 (FSHGTATFMI…ADYGYEIGFK (218 aa)) folds into the Radical SAM core domain.

It belongs to the radical SAM superfamily. Lipoyl synthase family. [4Fe-4S] cluster is required as a cofactor.

It is found in the cytoplasm. The catalysed reaction is [[Fe-S] cluster scaffold protein carrying a second [4Fe-4S](2+) cluster] + N(6)-octanoyl-L-lysyl-[protein] + 2 oxidized [2Fe-2S]-[ferredoxin] + 2 S-adenosyl-L-methionine + 4 H(+) = [[Fe-S] cluster scaffold protein] + N(6)-[(R)-dihydrolipoyl]-L-lysyl-[protein] + 4 Fe(3+) + 2 hydrogen sulfide + 2 5'-deoxyadenosine + 2 L-methionine + 2 reduced [2Fe-2S]-[ferredoxin]. Its pathway is protein modification; protein lipoylation via endogenous pathway; protein N(6)-(lipoyl)lysine from octanoyl-[acyl-carrier-protein]: step 2/2. Catalyzes the radical-mediated insertion of two sulfur atoms into the C-6 and C-8 positions of the octanoyl moiety bound to the lipoyl domains of lipoate-dependent enzymes, thereby converting the octanoylated domains into lipoylated derivatives. The sequence is that of Lipoyl synthase from Hahella chejuensis (strain KCTC 2396).